Consider the following 273-residue polypeptide: Putative phosphoenolpyruvate synthase regulatory protein (273 aa).

An ADP-binding site is contributed by 153–160 (AVSRAGKT).

It belongs to the pyruvate, phosphate/water dikinase regulatory protein family. PSRP subfamily.

It catalyses the reaction [pyruvate, water dikinase] + ADP = [pyruvate, water dikinase]-phosphate + AMP + H(+). The enzyme catalyses [pyruvate, water dikinase]-phosphate + phosphate + H(+) = [pyruvate, water dikinase] + diphosphate. Bifunctional serine/threonine kinase and phosphorylase involved in the regulation of the phosphoenolpyruvate synthase (PEPS) by catalyzing its phosphorylation/dephosphorylation. In Stenotrophomonas maltophilia (strain K279a), this protein is Putative phosphoenolpyruvate synthase regulatory protein.